The following is a 244-amino-acid chain: 7-cyano-7-deazaguanine synthase (244 aa).

ATP is bound at residue 14-24 (FSGGQDSATCL). Residues Cys-202, Cys-217, Cys-220, and Cys-223 each contribute to the Zn(2+) site.

This sequence belongs to the QueC family. Zn(2+) is required as a cofactor.

The enzyme catalyses 7-carboxy-7-deazaguanine + NH4(+) + ATP = 7-cyano-7-deazaguanine + ADP + phosphate + H2O + H(+). The protein operates within purine metabolism; 7-cyano-7-deazaguanine biosynthesis. In terms of biological role, catalyzes the ATP-dependent conversion of 7-carboxy-7-deazaguanine (CDG) to 7-cyano-7-deazaguanine (preQ(0)). The sequence is that of 7-cyano-7-deazaguanine synthase from Paraburkholderia phytofirmans (strain DSM 17436 / LMG 22146 / PsJN) (Burkholderia phytofirmans).